Reading from the N-terminus, the 549-residue chain is Membrane protein insertase YidC (549 aa).

Residues 9–29 (LRLILAIALSFLFIALYSYFF) form a helical membrane-spanning segment. Low complexity predominate over residues 37-51 (TETTKQETTNNHTAT). The tract at residues 37 to 56 (TETTKQETTNNHTATSPTAS) is disordered. A run of 5 helical transmembrane segments spans residues 328-348 (VIEY…LDYL), 351-371 (FVGN…IILY), 417-437 (GANP…FFAI), 452-472 (WVLW…PLLM), and 498-518 (LLPL…VLYW).

Belongs to the OXA1/ALB3/YidC family. Type 1 subfamily. In terms of assembly, interacts with the Sec translocase complex via SecD. Specifically interacts with transmembrane segments of nascent integral membrane proteins during membrane integration.

The protein resides in the cell inner membrane. In terms of biological role, required for the insertion and/or proper folding and/or complex formation of integral membrane proteins into the membrane. Involved in integration of membrane proteins that insert both dependently and independently of the Sec translocase complex, as well as at least some lipoproteins. Aids folding of multispanning membrane proteins. This Helicobacter pylori (strain J99 / ATCC 700824) (Campylobacter pylori J99) protein is Membrane protein insertase YidC.